The following is a 526-amino-acid chain: Exodeoxyribonuclease 7 large subunit (526 aa).

Residues 499–526 (AGEDGTPSQAPKKRPARAGEPTKQGSLF) are disordered.

It belongs to the XseA family. Heterooligomer composed of large and small subunits.

The protein localises to the cytoplasm. The catalysed reaction is Exonucleolytic cleavage in either 5'- to 3'- or 3'- to 5'-direction to yield nucleoside 5'-phosphates.. In terms of biological role, bidirectionally degrades single-stranded DNA into large acid-insoluble oligonucleotides, which are then degraded further into small acid-soluble oligonucleotides. The chain is Exodeoxyribonuclease 7 large subunit from Sinorhizobium medicae (strain WSM419) (Ensifer medicae).